The following is a 149-amino-acid chain: Large ribosomal subunit protein bL9 (149 aa).

This sequence belongs to the bacterial ribosomal protein bL9 family.

Binds to the 23S rRNA. The chain is Large ribosomal subunit protein bL9 from Tolumonas auensis (strain DSM 9187 / NBRC 110442 / TA 4).